A 290-amino-acid polypeptide reads, in one-letter code: uncharacterized protein (290 aa).

This is an uncharacterized protein from Ictalurid herpesvirus 1 (strain Auburn) (IcHV-1).